Reading from the N-terminus, the 441-residue chain is Ribulose bisphosphate carboxylase large chain (441 aa).

Substrate is bound by residues Asn89 and Thr139. The active-site Proton acceptor is Lys141. Lys143 contributes to the substrate binding site. Lys167, Asp169, and Glu170 together coordinate Mg(2+). An N6-carboxylysine modification is found at Lys167. His260 functions as the Proton acceptor in the catalytic mechanism. Residues Xaa261, His293, and Ser345 each coordinate substrate.

Belongs to the RuBisCO large chain family. Type I subfamily. In terms of assembly, heterohexadecamer of 8 large chains and 8 small chains; disulfide-linked. The disulfide link is formed within the large subunit homodimers. The cofactor is Mg(2+). The disulfide bond which can form in the large chain dimeric partners within the hexadecamer appears to be associated with oxidative stress and protein turnover.

It localises to the plastid. Its subcellular location is the chloroplast. It catalyses the reaction 2 (2R)-3-phosphoglycerate + 2 H(+) = D-ribulose 1,5-bisphosphate + CO2 + H2O. The catalysed reaction is D-ribulose 1,5-bisphosphate + O2 = 2-phosphoglycolate + (2R)-3-phosphoglycerate + 2 H(+). RuBisCO catalyzes two reactions: the carboxylation of D-ribulose 1,5-bisphosphate, the primary event in carbon dioxide fixation, as well as the oxidative fragmentation of the pentose substrate in the photorespiration process. Both reactions occur simultaneously and in competition at the same active site. The sequence is that of Ribulose bisphosphate carboxylase large chain from Apocynum cannabinum (Hemp dogbane).